The sequence spans 367 residues: GDP-perosamine synthase (367 aa).

Lysine 181 carries the post-translational modification N6-(pyridoxal phosphate)lysine.

This sequence belongs to the DegT/DnrJ/EryC1 family. In terms of assembly, homotetramer. Pyridoxal 5'-phosphate is required as a cofactor.

It catalyses the reaction GDP-alpha-D-perosamine + 2-oxoglutarate = GDP-4-dehydro-alpha-D-rhamnose + L-glutamate. The protein operates within bacterial outer membrane biogenesis; LPS O-antigen biosynthesis. Catalyzes the synthesis of GDP-perosamine from GDP-4-keto-6-deoxy-D-mannose and L-glutamate. Also shows weak activity with L-glutamine. In Vibrio cholerae, this protein is GDP-perosamine synthase.